A 223-amino-acid polypeptide reads, in one-letter code: MNQDQLKQAVAQAAVDHILPHLDSKSIVGVGTGSTANFFIDALARHKAEFDGAVASSEATAKRLKEHGIPVYELNTVSELEFYVDGADESNERLELIKGGGAALTREKIVAAVARTFICIADASKLVPILGQFPLPVEVIPMARSHVARQLVKLGGDPVYREGVLTDNGNIILDVHNLRIDSPVELEEKINAIVGVVTNGLFAARPADLLLLGTADGVQTLKA.

Substrate is bound by residues 32–35 (TGST), 85–88 (DGAD), and 98–101 (KGGG). The active-site Proton acceptor is Glu107. Position 125 (Lys125) interacts with substrate.

It belongs to the ribose 5-phosphate isomerase family. Homodimer.

The catalysed reaction is aldehydo-D-ribose 5-phosphate = D-ribulose 5-phosphate. It participates in carbohydrate degradation; pentose phosphate pathway; D-ribose 5-phosphate from D-ribulose 5-phosphate (non-oxidative stage): step 1/1. Catalyzes the reversible conversion of ribose-5-phosphate to ribulose 5-phosphate. In Pseudomonas paraeruginosa (strain DSM 24068 / PA7) (Pseudomonas aeruginosa (strain PA7)), this protein is Ribose-5-phosphate isomerase A.